Consider the following 267-residue polypeptide: Cyclin-C (267 aa).

The Cyclin N-terminal domain occupies 48–151; sequence IQVLGEQLKL…LLENLDCCLI (104 aa).

The protein belongs to the cyclin family. Cyclin C subfamily. In terms of assembly, component of the Cdk8 module of the Mediator complex.

The protein localises to the nucleus. Its function is as follows. Component of the Mediator complex, a coactivator involved in regulated gene transcription of nearly all RNA polymerase II-dependent genes. Mediator functions as a bridge to convey information from gene-specific regulatory proteins to the basal RNA polymerase II transcription machinery. Mediator is recruited to promoters by direct interactions with regulatory proteins and serves as a scaffold for the assembly of a functional preinitiation complex with RNA polymerase II and the general transcription factors. Binds to and activates cyclin-dependent kinase Cdk8 that phosphorylates the CTD (C-terminal domain) of the large subunit of RNA polymerase II (RNAp II), which may inhibit the formation of a transcription initiation complex. In Drosophila pseudoobscura pseudoobscura (Fruit fly), this protein is Cyclin-C (CycC).